The chain runs to 80 residues: Large ribosomal subunit protein uL24 (80 aa).

Residues 53–80 (HMRPTQSNPQGSIIEREFPIHASNVKKS) form a disordered region.

Belongs to the universal ribosomal protein uL24 family. Part of the 50S ribosomal subunit.

Functionally, one of two assembly initiator proteins, it binds directly to the 5'-end of the 23S rRNA, where it nucleates assembly of the 50S subunit. One of the proteins that surrounds the polypeptide exit tunnel on the outside of the subunit. The polypeptide is Large ribosomal subunit protein uL24 (Chlorobium luteolum (strain DSM 273 / BCRC 81028 / 2530) (Pelodictyon luteolum)).